The primary structure comprises 150 residues: MLGAALRRCAVAATTRADPRGLLHSARTPGPAVAIQSVRCYSHGSQETDEEFDARWVTYFNKPDIDAWELRKGINTLVTYDMVPEPKIIDAALRACRRLNDFASTVRILEVVKDKAGPHKEIYPYVIQELRPTLNELGISTPEELGLDKV.

Residues 1–41 (MLGAALRRCAVAATTRADPRGLLHSARTPGPAVAIQSVRCY) constitute a mitochondrion transit peptide. An SIFI-degron motif is present at residues 2–17 (LGAALRRCAVAATTRA). Lys-87 and Lys-113 each carry N6-acetyllysine. The residue at position 141 (Thr-141) is a Phosphothreonine.

The protein belongs to the cytochrome c oxidase subunit 5A family. Component of the cytochrome c oxidase (complex IV, CIV), a multisubunit enzyme composed of 14 subunits. The complex is composed of a catalytic core of 3 subunits MT-CO1, MT-CO2 and MT-CO3, encoded in the mitochondrial DNA, and 11 supernumerary subunits COX4I1 (or COX4I2), COX5A, COX5B, COX6A1 (or COX6A2), COX6B1 (or COX6B2), COX6C, COX7A2 (or COX7A1), COX7B, COX7C, COX8A and NDUFA4, which are encoded in the nuclear genome. The complex exists as a monomer or a dimer and forms supercomplexes (SCs) in the inner mitochondrial membrane with NADH-ubiquinone oxidoreductase (complex I, CI) and ubiquinol-cytochrome c oxidoreductase (cytochrome b-c1 complex, complex III, CIII), resulting in different assemblies (supercomplex SCI(1)III(2)IV(1) and megacomplex MCI(2)III(2)IV(2)). Interacts with AFG1L. Interacts with RAB5IF. Post-translationally, in response to mitochondrial stress, the precursor protein is ubiquitinated by the SIFI complex in the cytoplasm before mitochondrial import, leading to its degradation. Within the SIFI complex, UBR4 initiates ubiquitin chain that are further elongated or branched by KCMF1.

It is found in the mitochondrion inner membrane. It participates in energy metabolism; oxidative phosphorylation. Its function is as follows. Component of the cytochrome c oxidase, the last enzyme in the mitochondrial electron transport chain which drives oxidative phosphorylation. The respiratory chain contains 3 multisubunit complexes succinate dehydrogenase (complex II, CII), ubiquinol-cytochrome c oxidoreductase (cytochrome b-c1 complex, complex III, CIII) and cytochrome c oxidase (complex IV, CIV), that cooperate to transfer electrons derived from NADH and succinate to molecular oxygen, creating an electrochemical gradient over the inner membrane that drives transmembrane transport and the ATP synthase. Cytochrome c oxidase is the component of the respiratory chain that catalyzes the reduction of oxygen to water. Electrons originating from reduced cytochrome c in the intermembrane space (IMS) are transferred via the dinuclear copper A center (CU(A)) of subunit 2 and heme A of subunit 1 to the active site in subunit 1, a binuclear center (BNC) formed by heme A3 and copper B (CU(B)). The BNC reduces molecular oxygen to 2 water molecules using 4 electrons from cytochrome c in the IMS and 4 protons from the mitochondrial matrix. The chain is Cytochrome c oxidase subunit 5A, mitochondrial (COX5A) from Homo sapiens (Human).